Reading from the N-terminus, the 187-residue chain is Ribosome-recycling factor (187 aa).

The protein belongs to the RRF family.

The protein resides in the cytoplasm. Functionally, responsible for the release of ribosomes from messenger RNA at the termination of protein biosynthesis. May increase the efficiency of translation by recycling ribosomes from one round of translation to another. This Methylorubrum extorquens (strain CM4 / NCIMB 13688) (Methylobacterium extorquens) protein is Ribosome-recycling factor.